Consider the following 413-residue polypeptide: CinA-like protein (413 aa).

The protein belongs to the CinA family.

In Desulfosudis oleivorans (strain DSM 6200 / JCM 39069 / Hxd3) (Desulfococcus oleovorans), this protein is CinA-like protein.